A 162-amino-acid chain; its full sequence is Thy-1 membrane glycoprotein (162 aa).

The N-terminal stretch at 1 to 19 (MNPAISVALLLSVLQVSRG) is a signal peptide. Gln-20 carries the post-translational modification Pyrrolidone carboxylic acid. Residues 20–127 (QKVTSLTACL…NKSISVYRDK (108 aa)) form the Ig-like V-type domain. 2 cysteine pairs are disulfide-bonded: Cys-28/Cys-131 and Cys-38/Cys-105. Residues Asn-42, Asn-94, and Asn-118 are each glycosylated (N-linked (GlcNAc...) asparagine). A lipid anchor (GPI-anchor amidated cysteine; alternate) is attached at Cys-131. Positions 132–162 (GGISLLVQNTSWMLLLLLSLSLLQALDFISL) are cleaved as a propeptide — removed in mature form.

It is found in the cell membrane. Functionally, may play a role in cell-cell or cell-ligand interactions during synaptogenesis and other events in the brain. The chain is Thy-1 membrane glycoprotein (Thy1) from Mus musculus (Mouse).